Reading from the N-terminus, the 195-residue chain is MARTARIERKTLESDVLVELDLDGTGISSSDTGVPFFDHMLSQLGKHGGFDLTVRTRGDLHIDAHHTVEDTSIAFGSALREALGDKAGIRRFGDATVPLDEALAQAAVDLSGRPYCVHVEPDLVGMIGTYDTTLTRHIFESITASARLALHVRVLSGRNAHHVVEAQFKAVARALRDAVALDARVAGIPSTKGVL.

The protein belongs to the imidazoleglycerol-phosphate dehydratase family.

The protein resides in the cytoplasm. It catalyses the reaction D-erythro-1-(imidazol-4-yl)glycerol 3-phosphate = 3-(imidazol-4-yl)-2-oxopropyl phosphate + H2O. Its pathway is amino-acid biosynthesis; L-histidine biosynthesis; L-histidine from 5-phospho-alpha-D-ribose 1-diphosphate: step 6/9. This Frankia casuarinae (strain DSM 45818 / CECT 9043 / HFP020203 / CcI3) protein is Imidazoleglycerol-phosphate dehydratase.